The primary structure comprises 688 residues: Glycine--tRNA ligase beta subunit (688 aa).

This sequence belongs to the class-II aminoacyl-tRNA synthetase family. Tetramer of two alpha and two beta subunits.

The protein resides in the cytoplasm. The catalysed reaction is tRNA(Gly) + glycine + ATP = glycyl-tRNA(Gly) + AMP + diphosphate. The sequence is that of Glycine--tRNA ligase beta subunit from Desulforudis audaxviator (strain MP104C).